The following is a 373-amino-acid chain: Glycerol-3-phosphate dehydrogenase [NAD(+)] 2 (373 aa).

S15 carries the phosphoserine modification. Residues 31-36 (GSGNWG), F123, K146, and A179 contribute to the NAD(+) site. K146 contributes to the substrate binding site. Residue K236 is the Proton acceptor of the active site. The NAD(+) site is built by R300 and Q329. 300-301 (RN) provides a ligand contact to substrate.

Belongs to the NAD-dependent glycerol-3-phosphate dehydrogenase family.

It localises to the cytoplasm. It catalyses the reaction sn-glycerol 3-phosphate + NAD(+) = dihydroxyacetone phosphate + NADH + H(+). This chain is Glycerol-3-phosphate dehydrogenase [NAD(+)] 2 (gpd2), found in Schizosaccharomyces pombe (strain 972 / ATCC 24843) (Fission yeast).